Consider the following 845-residue polypeptide: U-box domain-containing protein 52 (845 aa).

Disordered stretches follow at residues 180–210 and 229–258; these read RPSESDASGSIRFERSSSTSGSTDSPRLPPE and SPALKHSMGSNAVAQMDTSSSGTDQEEVST. Residues 187–204 are compositionally biased toward low complexity; it reads SGSIRFERSSSTSGSTDS. A compositionally biased stretch (polar residues) spans 236–251; the sequence is MGSNAVAQMDTSSSGT. Residues 351-468 are a coiled coil; the sequence is SITDNQVNLN…REKDKLQASL (118 aa). A Protein kinase domain is found at 490-754; sequence FAENLKIGIG…DLKDQIIPAL (265 aa). ATP is bound by residues 496–504 and Lys517; that span reads IGIGAYGSV. The active-site Proton acceptor is Asp612. The region spanning 774–845 is the U-box domain; that stretch reads GPPSHFICPL…AIMEWKSNKR (72 aa).

The protein belongs to the protein kinase superfamily. Ser/Thr protein kinase family.

The enzyme catalyses L-seryl-[protein] + ATP = O-phospho-L-seryl-[protein] + ADP + H(+). It carries out the reaction L-threonyl-[protein] + ATP = O-phospho-L-threonyl-[protein] + ADP + H(+). It catalyses the reaction S-ubiquitinyl-[E2 ubiquitin-conjugating enzyme]-L-cysteine + [acceptor protein]-L-lysine = [E2 ubiquitin-conjugating enzyme]-L-cysteine + N(6)-ubiquitinyl-[acceptor protein]-L-lysine.. It functions in the pathway protein modification; protein ubiquitination. Functionally, functions as an E3 ubiquitin ligase. The protein is U-box domain-containing protein 52 (PUB52) of Arabidopsis thaliana (Mouse-ear cress).